The primary structure comprises 127 residues: Small ribosomal subunit protein uS12 (127 aa).

3-methylthioaspartic acid is present on Asp-89.

This sequence belongs to the universal ribosomal protein uS12 family. In terms of assembly, part of the 30S ribosomal subunit. Contacts proteins S8 and S17. May interact with IF1 in the 30S initiation complex.

With S4 and S5 plays an important role in translational accuracy. In terms of biological role, interacts with and stabilizes bases of the 16S rRNA that are involved in tRNA selection in the A site and with the mRNA backbone. Located at the interface of the 30S and 50S subunits, it traverses the body of the 30S subunit contacting proteins on the other side and probably holding the rRNA structure together. The combined cluster of proteins S8, S12 and S17 appears to hold together the shoulder and platform of the 30S subunit. The polypeptide is Small ribosomal subunit protein uS12 (Nautilia profundicola (strain ATCC BAA-1463 / DSM 18972 / AmH)).